Reading from the N-terminus, the 714-residue chain is Fatty acid oxidation complex subunit alpha (714 aa).

The enoyl-CoA hydratase stretch occupies residues Met-1–Pro-190. Residues Ala-306–Gln-714 are 3-hydroxyacyl-CoA dehydrogenase.

The protein in the N-terminal section; belongs to the enoyl-CoA hydratase/isomerase family. In the central section; belongs to the 3-hydroxyacyl-CoA dehydrogenase family. As to quaternary structure, heterotetramer of two alpha chains (FadJ) and two beta chains (FadI).

It is found in the cytoplasm. It catalyses the reaction a (3S)-3-hydroxyacyl-CoA = a (2E)-enoyl-CoA + H2O. It carries out the reaction a 4-saturated-(3S)-3-hydroxyacyl-CoA = a (3E)-enoyl-CoA + H2O. The catalysed reaction is a (3S)-3-hydroxyacyl-CoA + NAD(+) = a 3-oxoacyl-CoA + NADH + H(+). The enzyme catalyses (3S)-3-hydroxybutanoyl-CoA = (3R)-3-hydroxybutanoyl-CoA. It participates in lipid metabolism; fatty acid beta-oxidation. In terms of biological role, catalyzes the formation of a hydroxyacyl-CoA by addition of water on enoyl-CoA. Also exhibits 3-hydroxyacyl-CoA epimerase and 3-hydroxyacyl-CoA dehydrogenase activities. This is Fatty acid oxidation complex subunit alpha from Escherichia coli O6:K15:H31 (strain 536 / UPEC).